Here is a 387-residue protein sequence, read N- to C-terminus: UDP-N-acetylglucosamine--N-acetylmuramyl-(pentapeptide) pyrophosphoryl-undecaprenol N-acetylglucosamine transferase (387 aa).

Residues 23 to 25 (TGG), Asn-135, Arg-174, Ser-203, Ile-261, 280 to 285 (ALTVSE), and Gln-306 each bind UDP-N-acetyl-alpha-D-glucosamine.

Belongs to the glycosyltransferase 28 family. MurG subfamily.

It is found in the cell inner membrane. It carries out the reaction di-trans,octa-cis-undecaprenyl diphospho-N-acetyl-alpha-D-muramoyl-L-alanyl-D-glutamyl-meso-2,6-diaminopimeloyl-D-alanyl-D-alanine + UDP-N-acetyl-alpha-D-glucosamine = di-trans,octa-cis-undecaprenyl diphospho-[N-acetyl-alpha-D-glucosaminyl-(1-&gt;4)]-N-acetyl-alpha-D-muramoyl-L-alanyl-D-glutamyl-meso-2,6-diaminopimeloyl-D-alanyl-D-alanine + UDP + H(+). The protein operates within cell wall biogenesis; peptidoglycan biosynthesis. In terms of biological role, cell wall formation. Catalyzes the transfer of a GlcNAc subunit on undecaprenyl-pyrophosphoryl-MurNAc-pentapeptide (lipid intermediate I) to form undecaprenyl-pyrophosphoryl-MurNAc-(pentapeptide)GlcNAc (lipid intermediate II). The sequence is that of UDP-N-acetylglucosamine--N-acetylmuramyl-(pentapeptide) pyrophosphoryl-undecaprenol N-acetylglucosamine transferase from Colwellia psychrerythraea (strain 34H / ATCC BAA-681) (Vibrio psychroerythus).